The primary structure comprises 304 residues: Signal recognition particle receptor FtsY (304 aa).

GTP contacts are provided by residues 109 to 116, 191 to 195, and 255 to 258; these read GVNGVGKT, DTAGR, and TKLD.

It belongs to the GTP-binding SRP family. FtsY subfamily. Part of the signal recognition particle protein translocation system, which is composed of SRP and FtsY. Sensitive to endogenous proteolytic cleavage between residues 18 and 19 and between residues 86 and 87.

It is found in the cell membrane. Its subcellular location is the cytoplasm. It carries out the reaction GTP + H2O = GDP + phosphate + H(+). In terms of biological role, involved in targeting and insertion of nascent membrane proteins into the cytoplasmic membrane. Acts as a receptor for the complex formed by the signal recognition particle (SRP) and the ribosome-nascent chain (RNC). The polypeptide is Signal recognition particle receptor FtsY (Thermus aquaticus).